The primary structure comprises 221 residues: UPF0502 protein PSPA7_1674 (221 aa).

The protein belongs to the UPF0502 family.

The protein is UPF0502 protein PSPA7_1674 of Pseudomonas paraeruginosa (strain DSM 24068 / PA7) (Pseudomonas aeruginosa (strain PA7)).